The chain runs to 194 residues: Fe/S biogenesis protein NfuA (194 aa).

[4Fe-4S] cluster-binding residues include cysteine 151 and cysteine 154.

The protein belongs to the NfuA family. Homodimer. [4Fe-4S] cluster is required as a cofactor.

Functionally, involved in iron-sulfur cluster biogenesis. Binds a 4Fe-4S cluster, can transfer this cluster to apoproteins, and thereby intervenes in the maturation of Fe/S proteins. Could also act as a scaffold/chaperone for damaged Fe/S proteins. This Pasteurella multocida (strain Pm70) protein is Fe/S biogenesis protein NfuA.